The primary structure comprises 286 residues: Phosphatidylserine decarboxylase proenzyme (286 aa).

Catalysis depends on charge relay system; for autoendoproteolytic cleavage activity residues aspartate 90, histidine 147, and serine 252. Serine 252 acts as the Schiff-base intermediate with substrate; via pyruvic acid; for decarboxylase activity in catalysis. Serine 252 bears the Pyruvic acid (Ser); by autocatalysis mark.

It belongs to the phosphatidylserine decarboxylase family. PSD-B subfamily. Prokaryotic type I sub-subfamily. As to quaternary structure, heterodimer of a large membrane-associated beta subunit and a small pyruvoyl-containing alpha subunit. The cofactor is pyruvate. Post-translationally, is synthesized initially as an inactive proenzyme. Formation of the active enzyme involves a self-maturation process in which the active site pyruvoyl group is generated from an internal serine residue via an autocatalytic post-translational modification. Two non-identical subunits are generated from the proenzyme in this reaction, and the pyruvate is formed at the N-terminus of the alpha chain, which is derived from the carboxyl end of the proenzyme. The autoendoproteolytic cleavage occurs by a canonical serine protease mechanism, in which the side chain hydroxyl group of the serine supplies its oxygen atom to form the C-terminus of the beta chain, while the remainder of the serine residue undergoes an oxidative deamination to produce ammonia and the pyruvoyl prosthetic group on the alpha chain. During this reaction, the Ser that is part of the protease active site of the proenzyme becomes the pyruvoyl prosthetic group, which constitutes an essential element of the active site of the mature decarboxylase.

The protein resides in the cell membrane. The catalysed reaction is a 1,2-diacyl-sn-glycero-3-phospho-L-serine + H(+) = a 1,2-diacyl-sn-glycero-3-phosphoethanolamine + CO2. Its pathway is phospholipid metabolism; phosphatidylethanolamine biosynthesis; phosphatidylethanolamine from CDP-diacylglycerol: step 2/2. Catalyzes the formation of phosphatidylethanolamine (PtdEtn) from phosphatidylserine (PtdSer). The chain is Phosphatidylserine decarboxylase proenzyme from Pseudomonas fluorescens (strain SBW25).